The chain runs to 297 residues: 4-hydroxy-tetrahydrodipicolinate synthase (297 aa).

T47 is a pyruvate binding site. Y136 (proton donor/acceptor) is an active-site residue. K165 serves as the catalytic Schiff-base intermediate with substrate. Position 206 (I206) interacts with pyruvate.

This sequence belongs to the DapA family. As to quaternary structure, homotetramer; dimer of dimers.

It is found in the cytoplasm. The enzyme catalyses L-aspartate 4-semialdehyde + pyruvate = (2S,4S)-4-hydroxy-2,3,4,5-tetrahydrodipicolinate + H2O + H(+). It participates in amino-acid biosynthesis; L-lysine biosynthesis via DAP pathway; (S)-tetrahydrodipicolinate from L-aspartate: step 3/4. Its function is as follows. Catalyzes the condensation of (S)-aspartate-beta-semialdehyde [(S)-ASA] and pyruvate to 4-hydroxy-tetrahydrodipicolinate (HTPA). This Campylobacter curvus (strain 525.92) protein is 4-hydroxy-tetrahydrodipicolinate synthase.